The following is a 2572-amino-acid chain: Zinc finger homeobox protein 2 (2572 aa).

Disordered regions lie at residues 1-107 (MATL…GLPP) and 343-425 (LSPP…ADDY). The segment covering 8-36 (STTGTTPSPGHNAPSLPSDTFSSSTPSDP) has biased composition (low complexity). Composition is skewed to polar residues over residues 44 to 53 (ASSTSENMRS) and 389 to 398 (LNQSSPTSKE). 2 consecutive C2H2-type zinc fingers follow at residues 453 to 476 (LKCPKCNWHYKYQQTLDVHMREKH) and 508 to 532 (YRCDVCNYSTTTKGNLSIHMQSDKH). 3 disordered regions span residues 537 to 566 (QGFQAGPGGQGSPPEASLPPSAGDKEPKTK), 608 to 655 (LPPG…LRPD), and 675 to 710 (RKFPTSAPGSLSPDAHLPPSQLLGSSSDSLPTSPPP). The segment covering 615 to 628 (PGPPPPPGATPTSP) has biased composition (pro residues). A compositionally biased stretch (low complexity) spans 696 to 705 (LLGSSSDSLP). 2 C2H2-type zinc fingers span residues 821–845 (LRCNICDFESNSKEKMQLHARGAAH) and 870–894 (YHCLLCAWETPSRLAVLQHLRTPAH). Positions 929 to 974 (QLRTPGKAPVTPLAEPPTPEKDAQNKTEQLASEETENKTGPSRDSA) are disordered. Polar residues predominate over residues 954–974 (KTEQLASEETENKTGPSRDSA). Residues 1009 to 1032 (YRCPLCQEQLVGRPALHFHLSHLH) form a C2H2-type 5 zinc finger. Positions 1061-1171 (PTLSPLDNGQ…PAPADSRHPL (111 aa)) are disordered. The segment covering 1120–1132 (GQPPSPAPSPVPE) has biased composition (pro residues). 2 C2H2-type zinc fingers span residues 1191–1217 (YKCTVCKESFTQKNILLVHYNSVSHLH) and 1248–1272 (FKCTVCRVSYNQSSTLEIHMRSVLH). Disordered stretches follow at residues 1269–1325 (SVLH…FLSP), 1389–1408 (LPAATPPPPPQPPKAELAER), and 1415–1434 (MAKEGNEAGPSSPPDPLPNE). Basic and acidic residues predominate over residues 1279–1311 (TKTDSKIEGPERSQEEPKEGETEGEVGTEKKGP). The span at 1392–1401 (ATPPPPPQPP) shows a compositional bias: pro residues. The C2H2-type 8 zinc-finger motif lies at 1480–1503 (LACGACGKLFSNMLILKTHEEHVH). A disordered region spans residues 1528–1591 (PPLAEPPKPP…SSRGNLPPLV (64 aa)). The segment at residues 1595-1654 (RRFSRTKFTEFQTQALQSFFETSAYPKDGEVERLASLLGLASRVVVVWFQNARQKARKNA) is a DNA-binding region (homeobox 1). Residues 1670-1696 (SGCRRCHATFSCVFELVRHLKKCYDDQ) form a C2H2-type 9; degenerate zinc finger. Acidic residues predominate over residues 1696–1724 (QTLEEEEEEAERGEEEEEVEEEEVEEEQG). 5 disordered regions span residues 1696-1769 (QTLE…SPAH), 1820-1860 (AATS…DKRL), 1912-2065 (ERKG…GMGQ), 2268-2327 (VQTA…NDAL), and 2398-2431 (NALLQPPPQPPEPTATAPPKPPELPAPGEGEAGE). A compositionally biased stretch (pro residues) spans 1728–1738 (PAGPEGPLPEP). The C2H2-type 10 zinc finger occupies 1769–1791 (HTCDQCAISFSSQDLLTSHRRLH). The segment at residues 1857 to 1916 (DKRLRTTILPEQLEILYRWYMQDSNPTRKMLDCISEEVGLKKRVVQVWFQNTRARERKGQ) is a DNA-binding region (homeobox 2). Over residues 1925-1939 (PSPAVKPPATATPAS) the composition is skewed to low complexity. Basic and acidic residues predominate over residues 1949–1963 (KVDDGTGREAPKREA). Residues 1991–2004 (TPEPPLPLLPPPPP) are compositionally biased toward pro residues. Low complexity predominate over residues 2017 to 2044 (SPESEACSLSAGDLSDSSASSLAEPESP). The span at 2045-2061 (GAGGTSGGPGGGTGVPD) shows a compositional bias: gly residues. Positions 2065 to 2124 (QRRYRTQMSSLQLKIMKACYEAYRTPTMQECEVLGEEIGLPKRVIQVWFQNARAKEKKAK) form a DNA-binding region, homeobox 3. Residues 2284 to 2293 (DQTNTSTAGT) are compositionally biased toward polar residues. Residues 2305–2315 (LGDKVSSERKP) are compositionally biased toward basic and acidic residues. Pro residues predominate over residues 2402–2422 (QPPPQPPEPTATAPPKPPELP). The C2H2-type 11; degenerate zinc finger occupies 2451–2471 (YLCRQCKMAFDGEAPATAHQR). A C2H2-type 12 zinc finger spans residues 2495–2519 (YHCLACEVLLSGREALASHLRSSAH). The disordered stretch occupies residues 2551–2572 (EARLPHTDSNPKTTTTSTLLAL). Positions 2563–2572 (TTTTSTLLAL) are enriched in low complexity.

It localises to the nucleus. Functionally, transcriptional regulator that is critical for the regulation of pain perception and processing of noxious stimuli. The chain is Zinc finger homeobox protein 2 (ZFHX2) from Homo sapiens (Human).